A 527-amino-acid chain; its full sequence is Zinc finger C2HC domain-containing protein 1C (527 aa).

Disordered regions lie at residues 18–105 and 145–170; these read HNKT…GQGK and VHRK…LPDS. Over residues 50–61 the composition is skewed to polar residues; that stretch reads NSFQSKLWSNTE. Basic residues predominate over residues 71-85; that stretch reads RPKRNVCTKARRHSC. Over residues 93 to 102 the composition is skewed to low complexity; sequence QQGSGNNAQG. Residues 207 to 254 adopt a coiled-coil conformation; it reads TQIQRLEAAGESLQKEIRRKEILLQEKLKKTEEGLRRMQKEKKQAIFQ. Disordered stretches follow at residues 264–316 and 352–379; these read LPRR…LSDY and LGST…EPEL. Residues 286 to 298 show a composition bias toward basic and acidic residues; the sequence is FRSEVFSRNRGED. Positions 301–312 are enriched in polar residues; it reads CDQAQENPSPRQ. A compositionally biased stretch (low complexity) spans 358–374; it reads ESSRSGTPGSSGSSSST. 2 consecutive C2HC/C3H-type zinc fingers follow at residues 378–407 and 489–518; these read ELAK…MQGS and DYVQ…IKNR. Zn(2+) is bound by residues Cys382, Cys385, His397, Cys401, Cys493, Cys496, His508, and Cys512. The tract at residues 507-527 is disordered; that stretch reads RHIPKCKTIKNRPPPPRRHDS.

It belongs to the ZC2HC1 family. It depends on Zn(2+) as a cofactor.

The polypeptide is Zinc finger C2HC domain-containing protein 1C (Zc2hc1c) (Mus musculus (Mouse)).